Here is a 237-residue protein sequence, read N- to C-terminus: Protein GrpE (237 aa).

Residues 1 to 65 (MTDSYKLPDN…DAREDDRDPT (65 aa)) are disordered. Over residues 55–65 (VDAREDDRDPT) the composition is skewed to basic and acidic residues.

Belongs to the GrpE family. As to quaternary structure, homodimer.

Its subcellular location is the cytoplasm. Its function is as follows. Participates actively in the response to hyperosmotic and heat shock by preventing the aggregation of stress-denatured proteins, in association with DnaK and GrpE. It is the nucleotide exchange factor for DnaK and may function as a thermosensor. Unfolded proteins bind initially to DnaJ; upon interaction with the DnaJ-bound protein, DnaK hydrolyzes its bound ATP, resulting in the formation of a stable complex. GrpE releases ADP from DnaK; ATP binding to DnaK triggers the release of the substrate protein, thus completing the reaction cycle. Several rounds of ATP-dependent interactions between DnaJ, DnaK and GrpE are required for fully efficient folding. The protein is Protein GrpE of Corynebacterium efficiens (strain DSM 44549 / YS-314 / AJ 12310 / JCM 11189 / NBRC 100395).